Reading from the N-terminus, the 281-residue chain is Beta-etherase (281 aa).

A GST N-terminal domain is found at 11-87; it reads DLQLESGCTI…YLDEKYPDRP (77 aa). Residues 244 to 281 form a disordered region; sequence GDPEPFVRQTGPAGAGGQALNKGPQTTKMPPRVAEKAD.

Belongs to the GST superfamily.

The protein resides in the cell inner membrane. Functionally, able to degrade various dimeric lignin compounds. Catalyzes the unique and reductive cleavage of arylglycerol-beta-aryl ether. This Sphingobium sp. (strain NBRC 103272 / SYK-6) protein is Beta-etherase (ligE).